We begin with the raw amino-acid sequence, 574 residues long: Calcium-dependent protein kinase 9 (574 aa).

The interval 1–64 (MGNTCCVAPA…RARAKPNPYD (64 aa)) is disordered. Gly-2 carries the N-myristoyl glycine lipid modification. Positions 28–40 (KSPAPSATTTTAT) are enriched in low complexity. A Protein kinase domain is found at 101 to 359 (YQLGRELGRG…AQQVLDHPWL (259 aa)). ATP-binding positions include 107-115 (LGRGEFGVT) and Lys-130. The active-site Proton acceptor is the Asp-225. Residues 365–395 (APNVPLGDVVRARLKQFSLMNRLKKKAMRVI) form an autoinhibitory domain region. 4 consecutive EF-hand domains span residues 402-437 (EEVE…VGSK), 438-473 (LAEP…LQRL), 474-509 (SNDN…DSGH), and 510-545 (ADDA…GTDW). Ca(2+) is bound by residues Asp-415, Asp-417, Asn-419, Arg-421, Glu-426, Asp-451, Asp-453, Asn-455, Tyr-457, Glu-462, Asp-487, Asp-489, Ser-491, Tyr-493, Glu-498, Asp-523, Asp-525, Asp-527, Arg-529, and Glu-534.

Belongs to the protein kinase superfamily. Ser/Thr protein kinase family. CDPK subfamily. As to expression, expressed in leaf blades and stems. Expressed at low levels in anthers and spikelets.

It localises to the membrane. It carries out the reaction L-seryl-[protein] + ATP = O-phospho-L-seryl-[protein] + ADP + H(+). The catalysed reaction is L-threonyl-[protein] + ATP = O-phospho-L-threonyl-[protein] + ADP + H(+). Activated by calcium. Autophosphorylation may play an important role in the regulation of the kinase activity. Functionally, may play a role in signal transduction pathways that involve calcium as a second messenger. Functions in signal transduction pathways that positively regulate responses to drought, osmotic, and dehydration stress. Regulates expression of stress-associated genes in response to drought. Involved in tolerance to drought stress by increasing proline and soluble sugars, and improving stomatal closure. Required for pollen maturation and spikelet fertility. This Oryza sativa subsp. japonica (Rice) protein is Calcium-dependent protein kinase 9.